A 229-amino-acid chain; its full sequence is Ribonuclease HII (229 aa).

In terms of domain architecture, RNase H type-2 spans Gly-34–Gln-225. A divalent metal cation is bound by residues Asp-40, Glu-41, and Asp-134.

This sequence belongs to the RNase HII family. Requires Mn(2+) as cofactor. The cofactor is Mg(2+).

It localises to the cytoplasm. It catalyses the reaction Endonucleolytic cleavage to 5'-phosphomonoester.. Endonuclease that specifically degrades the RNA of RNA-DNA hybrids. The chain is Ribonuclease HII from Corynebacterium diphtheriae (strain ATCC 700971 / NCTC 13129 / Biotype gravis).